The primary structure comprises 148 residues: Ribosome maturation factor RimP (148 aa).

Belongs to the RimP family.

The protein localises to the cytoplasm. In terms of biological role, required for maturation of 30S ribosomal subunits. In Thermosipho africanus (strain TCF52B), this protein is Ribosome maturation factor RimP.